The following is a 339-amino-acid chain: Anthranilate phosphoribosyltransferase (339 aa).

Residues Gly79, 82–83 (GD), Ser87, 89–92 (NIST), 107–115 (KHGNRSISS), and Ser119 each bind 5-phospho-alpha-D-ribose 1-diphosphate. Residue Gly79 coordinates anthranilate. Ser91 serves as a coordination point for Mg(2+). An anthranilate-binding site is contributed by Asn110. Residue Arg165 coordinates anthranilate. The Mg(2+) site is built by Asp224 and Glu225.

The protein belongs to the anthranilate phosphoribosyltransferase family. As to quaternary structure, homodimer. Mg(2+) serves as cofactor.

It catalyses the reaction N-(5-phospho-beta-D-ribosyl)anthranilate + diphosphate = 5-phospho-alpha-D-ribose 1-diphosphate + anthranilate. It functions in the pathway amino-acid biosynthesis; L-tryptophan biosynthesis; L-tryptophan from chorismate: step 2/5. In terms of biological role, catalyzes the transfer of the phosphoribosyl group of 5-phosphorylribose-1-pyrophosphate (PRPP) to anthranilate to yield N-(5'-phosphoribosyl)-anthranilate (PRA). The sequence is that of Anthranilate phosphoribosyltransferase from Listeria monocytogenes serotype 4b (strain CLIP80459).